Consider the following 397-residue polypeptide: Phosphoglycerate kinase (397 aa).

Substrate is bound by residues 26–28 (DLN), R42, 65–68 (HLGR), R119, and R152. ATP contacts are provided by residues K203, E325, and 351–354 (GGDT).

This sequence belongs to the phosphoglycerate kinase family. Monomer.

It is found in the cytoplasm. The catalysed reaction is (2R)-3-phosphoglycerate + ATP = (2R)-3-phospho-glyceroyl phosphate + ADP. It functions in the pathway carbohydrate degradation; glycolysis; pyruvate from D-glyceraldehyde 3-phosphate: step 2/5. This is Phosphoglycerate kinase from Bordetella pertussis (strain Tohama I / ATCC BAA-589 / NCTC 13251).